Reading from the N-terminus, the 267-residue chain is Stomatin-3 (267 aa).

A helical membrane pass occupies residues 17–37 (FVALICAWAFLLLTFPVSIFF).

This sequence belongs to the band 7/mec-2 family.

It localises to the membrane. The chain is Stomatin-3 (sto-3) from Caenorhabditis elegans.